Here is a 460-residue protein sequence, read N- to C-terminus: Light-independent protochlorophyllide reductase subunit N (460 aa).

Cysteine 22, cysteine 47, and cysteine 107 together coordinate [4Fe-4S] cluster.

It belongs to the BchN/ChlN family. Protochlorophyllide reductase is composed of three subunits; ChlL, ChlN and ChlB. Forms a heterotetramer of two ChlB and two ChlN subunits. The cofactor is [4Fe-4S] cluster.

The enzyme catalyses chlorophyllide a + oxidized 2[4Fe-4S]-[ferredoxin] + 2 ADP + 2 phosphate = protochlorophyllide a + reduced 2[4Fe-4S]-[ferredoxin] + 2 ATP + 2 H2O. It participates in porphyrin-containing compound metabolism; chlorophyll biosynthesis (light-independent). In terms of biological role, component of the dark-operative protochlorophyllide reductase (DPOR) that uses Mg-ATP and reduced ferredoxin to reduce ring D of protochlorophyllide (Pchlide) to form chlorophyllide a (Chlide). This reaction is light-independent. The NB-protein (ChlN-ChlB) is the catalytic component of the complex. The protein is Light-independent protochlorophyllide reductase subunit N of Thermosynechococcus vestitus (strain NIES-2133 / IAM M-273 / BP-1).